We begin with the raw amino-acid sequence, 254 residues long: Imidazole glycerol phosphate synthase subunit HisF (254 aa).

Catalysis depends on residues Asp-11 and Asp-130.

Belongs to the HisA/HisF family. In terms of assembly, heterodimer of HisH and HisF.

The protein localises to the cytoplasm. It catalyses the reaction 5-[(5-phospho-1-deoxy-D-ribulos-1-ylimino)methylamino]-1-(5-phospho-beta-D-ribosyl)imidazole-4-carboxamide + L-glutamine = D-erythro-1-(imidazol-4-yl)glycerol 3-phosphate + 5-amino-1-(5-phospho-beta-D-ribosyl)imidazole-4-carboxamide + L-glutamate + H(+). It participates in amino-acid biosynthesis; L-histidine biosynthesis; L-histidine from 5-phospho-alpha-D-ribose 1-diphosphate: step 5/9. In terms of biological role, IGPS catalyzes the conversion of PRFAR and glutamine to IGP, AICAR and glutamate. The HisF subunit catalyzes the cyclization activity that produces IGP and AICAR from PRFAR using the ammonia provided by the HisH subunit. The sequence is that of Imidazole glycerol phosphate synthase subunit HisF from Halorhodospira halophila (strain DSM 244 / SL1) (Ectothiorhodospira halophila (strain DSM 244 / SL1)).